Consider the following 597-residue polypeptide: MDHIRNFSIIAHIDHGKSTLADRIIQVCGGLADREMEAQVLDSMDIERERGITIKAQTAALSYRARDGKVYNLNLIDTPGHVDFSYEVSRSLSACEGALLVVDASQGVEAQTVANCYTAIELGVEVVPVLNKIDLPAANPENAIEEIEDVIGIDATDATRCSAKTGLGVEDVLESLIAKVPPPKGDPAAPLQALIIDSWFDNYVGVVMLVRIVNGTLRPKDKIKMMATGAQYPVEHVGVFTPKSRNLDSLSAGQVGFIIAGIKELTAAKVGDTVTHAAKAAAEPLPGFKEVKPQVFAGLYPVEANQYDALRESLEKLKLNDASLQYEPEVSQALGFGFRCGFLGLLHMEIVQERLEREFDMDLITTAPTVVYEVVQSDGSTIMVENPAKMPEPGRIAEVREPIVTVNLYMPQDYVGSVITLCEQKRGSQINMQYHGRQVQLTYEIPMAEIVLDFFDRLKSVSRGYASMDYEFKEYRSSDVVKVDMLINGDKVDALSIIVHRSQSQYRGREVAAKMREIIPRQMYDVAIQAAIGAHIVARENIKALRKNVLAKCYGGDITRKKKLLEKQKEGKKRMKQVGSVEIPQEAFLAILRVEDK.

In terms of domain architecture, tr-type G spans 2-184 (DHIRNFSIIA…SLIAKVPPPK (183 aa)). GTP contacts are provided by residues 14-19 (DHGKST) and 131-134 (NKID).

This sequence belongs to the TRAFAC class translation factor GTPase superfamily. Classic translation factor GTPase family. LepA subfamily.

The protein resides in the cell inner membrane. The enzyme catalyses GTP + H2O = GDP + phosphate + H(+). Its function is as follows. Required for accurate and efficient protein synthesis under certain stress conditions. May act as a fidelity factor of the translation reaction, by catalyzing a one-codon backward translocation of tRNAs on improperly translocated ribosomes. Back-translocation proceeds from a post-translocation (POST) complex to a pre-translocation (PRE) complex, thus giving elongation factor G a second chance to translocate the tRNAs correctly. Binds to ribosomes in a GTP-dependent manner. This chain is Elongation factor 4, found in Burkholderia cenocepacia (strain HI2424).